We begin with the raw amino-acid sequence, 284 residues long: Probable endonuclease 4 (284 aa).

Zn(2+)-binding residues include His-66, His-106, Glu-142, Asp-176, His-179, His-213, Asp-226, His-228, and Glu-258.

The protein belongs to the AP endonuclease 2 family. Zn(2+) is required as a cofactor.

The catalysed reaction is Endonucleolytic cleavage to 5'-phosphooligonucleotide end-products.. Functionally, endonuclease IV plays a role in DNA repair. It cleaves phosphodiester bonds at apurinic or apyrimidinic (AP) sites, generating a 3'-hydroxyl group and a 5'-terminal sugar phosphate. This is Probable endonuclease 4 from Natranaerobius thermophilus (strain ATCC BAA-1301 / DSM 18059 / JW/NM-WN-LF).